An 80-amino-acid polypeptide reads, in one-letter code: Protein KorB (80 aa).

2 consecutive DNA-binding regions (H-T-H motif) follow at residues 13–32 (AEAALKPLGQQRINVLAELD) and 56–75 (NEVTAVAPNTARAWAKAEAE).

Functionally, repressor for the transcription of certain pIJ101 promoters, including those the from kilA and kilB loci. The sequence is that of Protein KorB (korB) from Streptomyces lividans.